We begin with the raw amino-acid sequence, 103 residues long: Endoribonuclease MazF3 (103 aa).

It belongs to the PemK/MazF family. Forms a complex with cognate antitoxin MazE3.

Toxic component of a type II toxin-antitoxin (TA) system. Acts as an endoribonuclease, cleaving in U-rich regions. Neutralized by cognate antitoxin MazE3. This Mycobacterium tuberculosis (strain CDC 1551 / Oshkosh) protein is Endoribonuclease MazF3 (mazF3).